The sequence spans 579 residues: Threonylcarbamoyladenosine tRNA methylthiotransferase (579 aa).

Ser53 is subject to Phosphoserine. Positions 64 to 172 (QKIWIRTWGC…VVEVVEETIK (109 aa)) constitute an MTTase N-terminal domain. Residues Cys73 and Cys109 each coordinate [4Fe-4S] cluster. Ser122 is subject to Phosphoserine. 4 residues coordinate [4Fe-4S] cluster: Cys138, Cys214, Cys218, and Cys221. One can recognise a Radical SAM core domain in the interval 200–431 (RKNPLIEIIS…RVFHSYSPYD (232 aa)). The TRAM domain occupies 431 to 493 (DHKIGERQQV…KHFMKGQPVS (63 aa)). Residue Thr499 is modified to Phosphothreonine. The chain crosses the membrane as a helical span at residues 556 to 578 (CALRMSVGLALLGLLFAFFVKVY).

The protein belongs to the methylthiotransferase family. CDKAL1 subfamily. Requires [4Fe-4S] cluster as cofactor. Expressed in pancreatic islets.

The protein resides in the endoplasmic reticulum membrane. The catalysed reaction is N(6)-L-threonylcarbamoyladenosine(37) in tRNA + (sulfur carrier)-SH + AH2 + 2 S-adenosyl-L-methionine = 2-methylsulfanyl-N(6)-L-threonylcarbamoyladenosine(37) in tRNA + (sulfur carrier)-H + 5'-deoxyadenosine + L-methionine + A + S-adenosyl-L-homocysteine + 2 H(+). In terms of biological role, catalyzes the methylthiolation of N6-threonylcarbamoyladenosine (t(6)A), leading to the formation of 2-methylthio-N6-threonylcarbamoyladenosine (ms(2)t(6)A) at position 37 in tRNAs that read codons beginning with adenine. This chain is Threonylcarbamoyladenosine tRNA methylthiotransferase (CDKAL1), found in Homo sapiens (Human).